The following is a 407-amino-acid chain: UPF0597 protein NAMH_0191 (407 aa).

This sequence belongs to the UPF0597 family.

The polypeptide is UPF0597 protein NAMH_0191 (Nautilia profundicola (strain ATCC BAA-1463 / DSM 18972 / AmH)).